The primary structure comprises 158 residues: ATP synthase subunit b', chloroplastic (158 aa).

Residues 21-41 (GTLPLMALQFLILMLLLNTIF) traverse the membrane as a helical segment.

It belongs to the ATPase B chain family. F-type ATPases have 2 components, F(1) - the catalytic core - and F(0) - the membrane proton channel. F(1) has five subunits: alpha(3), beta(3), gamma(1), delta(1), epsilon(1). F(0) has four main subunits: a(1), b(1), b'(1) and c(10-14). The alpha and beta chains form an alternating ring which encloses part of the gamma chain. F(1) is attached to F(0) by a central stalk formed by the gamma and epsilon chains, while a peripheral stalk is formed by the delta, b and b' chains.

The protein localises to the plastid. The protein resides in the chloroplast thylakoid membrane. Its function is as follows. F(1)F(0) ATP synthase produces ATP from ADP in the presence of a proton or sodium gradient. F-type ATPases consist of two structural domains, F(1) containing the extramembraneous catalytic core and F(0) containing the membrane proton channel, linked together by a central stalk and a peripheral stalk. During catalysis, ATP synthesis in the catalytic domain of F(1) is coupled via a rotary mechanism of the central stalk subunits to proton translocation. In terms of biological role, component of the F(0) channel, it forms part of the peripheral stalk, linking F(1) to F(0). The b'-subunit is a diverged and duplicated form of b found in plants and photosynthetic bacteria. The protein is ATP synthase subunit b', chloroplastic of Porphyra purpurea (Red seaweed).